The primary structure comprises 106 residues: MSVSAIFGTGIVTVAASPVLRQFQVPKLGNGGGLGMVIECSSRPQKKSTAHHRKTRPKKTQPWDIKRKPTVYAPLPPLPAEWSPFTLASDDGGAATAAGDLVSGAA.

The N-terminal 39 residues, 1-39 (MSVSAIFGTGIVTVAASPVLRQFQVPKLGNGGGLGMVIE), are a transit peptide targeting the chloroplast. The interval 42-70 (SRPQKKSTAHHRKTRPKKTQPWDIKRKPT) is disordered. The segment covering 44–59 (PQKKSTAHHRKTRPKK) has biased composition (basic residues).

The protein belongs to the chloroplast-specific ribosomal protein cL38 family. In terms of assembly, part of the 50S ribosomal subunit.

The protein localises to the plastid. The protein resides in the chloroplast. This is Large ribosomal subunit protein cL38 (PSRP6) from Arabidopsis thaliana (Mouse-ear cress).